We begin with the raw amino-acid sequence, 429 residues long: Adenylosuccinate synthetase (429 aa).

Residues 13–19 (GDEGKGK) and 41–43 (GHT) each bind GTP. Catalysis depends on Asp-14, which acts as the Proton acceptor. Residues Asp-14 and Gly-41 each coordinate Mg(2+). Residues 14–17 (DEGK), 39–42 (NAGH), Thr-130, Arg-144, Gln-225, Thr-240, and Arg-304 each bind IMP. His-42 acts as the Proton donor in catalysis. 300–306 (ATTGRAR) contributes to the substrate binding site. GTP-binding positions include Arg-306, 332 to 334 (KLD), and 413 to 415 (STG).

Belongs to the adenylosuccinate synthetase family. Homodimer. Requires Mg(2+) as cofactor.

It localises to the cytoplasm. The catalysed reaction is IMP + L-aspartate + GTP = N(6)-(1,2-dicarboxyethyl)-AMP + GDP + phosphate + 2 H(+). It functions in the pathway purine metabolism; AMP biosynthesis via de novo pathway; AMP from IMP: step 1/2. Plays an important role in the de novo pathway of purine nucleotide biosynthesis. Catalyzes the first committed step in the biosynthesis of AMP from IMP. The chain is Adenylosuccinate synthetase from Pseudomonas fluorescens (strain Pf0-1).